Consider the following 305-residue polypeptide: HPr kinase/phosphorylase (305 aa).

Catalysis depends on residues His138 and Lys159. Residue 153-160 (GESGIGKS) coordinates ATP. Ser160 contributes to the Mg(2+) binding site. Asp177 acts as the Proton acceptor; for phosphorylation activity. Proton donor; for dephosphorylation activity in catalysis. Positions 201 to 210 (IEIRGIGILD) are important for the catalytic mechanism of both phosphorylation and dephosphorylation. Mg(2+) is bound at residue Glu202. Arg243 is an active-site residue. The segment at 264–269 (PVRPGR) is important for the catalytic mechanism of dephosphorylation.

The protein belongs to the HPrK/P family. Homohexamer. Mg(2+) serves as cofactor.

The enzyme catalyses [HPr protein]-L-serine + ATP = [HPr protein]-O-phospho-L-serine + ADP + H(+). It catalyses the reaction [HPr protein]-O-phospho-L-serine + phosphate + H(+) = [HPr protein]-L-serine + diphosphate. In terms of biological role, catalyzes the ATP- as well as the pyrophosphate-dependent phosphorylation of a specific serine residue in HPr, a phosphocarrier protein of the phosphoenolpyruvate-dependent sugar phosphotransferase system (PTS). HprK/P also catalyzes the pyrophosphate-producing, inorganic phosphate-dependent dephosphorylation (phosphorolysis) of seryl-phosphorylated HPr (P-Ser-HPr). The two antagonistic activities of HprK/P are regulated by several intracellular metabolites, which change their concentration in response to the absence or presence of rapidly metabolisable carbon sources (glucose, fructose, etc.) in the growth medium. Therefore, by controlling the phosphorylation state of HPr, HPrK/P is a sensor enzyme that plays a major role in the regulation of carbon metabolism and sugar transport: it mediates carbon catabolite repression (CCR), and regulates PTS-catalyzed carbohydrate uptake and inducer exclusion. This is HPr kinase/phosphorylase from Thermoanaerobacter pseudethanolicus (strain ATCC 33223 / 39E) (Clostridium thermohydrosulfuricum).